A 296-amino-acid polypeptide reads, in one-letter code: 33 kDa chaperonin (296 aa).

Intrachain disulfides connect C238–C240 and C271–C274.

Belongs to the HSP33 family. Post-translationally, under oxidizing conditions two disulfide bonds are formed involving the reactive cysteines. Under reducing conditions zinc is bound to the reactive cysteines and the protein is inactive.

It is found in the cytoplasm. In terms of biological role, redox regulated molecular chaperone. Protects both thermally unfolding and oxidatively damaged proteins from irreversible aggregation. Plays an important role in the bacterial defense system toward oxidative stress. The polypeptide is 33 kDa chaperonin (Clostridium botulinum (strain Okra / Type B1)).